The following is a 204-amino-acid chain: Small ribosomal subunit protein uS4 (204 aa).

The S4 RNA-binding domain occupies 93-156 (SRLSSVLYHS…AKIPVVVEAE (64 aa)).

The protein belongs to the universal ribosomal protein uS4 family. In terms of assembly, part of the 30S ribosomal subunit. Contacts protein S5. The interaction surface between S4 and S5 is involved in control of translational fidelity.

Its function is as follows. One of the primary rRNA binding proteins, it binds directly to 16S rRNA where it nucleates assembly of the body of the 30S subunit. In terms of biological role, with S5 and S12 plays an important role in translational accuracy. This Wolbachia pipientis wMel protein is Small ribosomal subunit protein uS4.